A 1049-amino-acid chain; its full sequence is MKPLTGNYDPKKIEDEIISFWEENKIYNKLRDIVSKRREKFLFIDGPPYPSSPTPHIGTIWNKVIKDCILRYERLLGKKVHDQPGYDTHGLPIEVATERLLGILNKQEIIDKIGVENFINKCKEFALSNATKMTQNFKDVGVFMDWERPYYTLDPSYISSSWSVIKKAYEKGMLDKGTAVLHWCPRCETTLSDYEVSEYRDLEDPSIYVKFKIKGEENRYLLIWTTTPWTIPSNVFVMVNKDYDYADVEVNGEVLVLAKDRIEAVMKEASITNYKVLRTYKGSELIGVKYKHPLRDFVSAQTKLDDFHQVVDAGNVVTLTDGTGLVHAATGHGEEDFLIGQKYGFPVVMFVNDRGEFTEEGGKYKGLKVRDASKVIINDLKSKNALFFEGKIVHRYPVCWRCKTPLVLRAIDQWFIRVTKIKDEMLKEIENVNWIPDWGKSRISNMVKELRDWVISRQRFWGTPLPIWICEKCNNVIVVGSREDLESIAIDSVPNDLHRPWIDNVRVKCNKCGGVAKRIADVADVWFDSGVAFFASLGKDWQEKWKELGPVDLVLEGHDQLRGWFFSLLRSGLILLDKAPYVSVLVHGFMLDEQGREMHKSLGNYVEPSVVIQRYGRDILRLWLLRNTTWEDARFSWRALELTKRDLQIIWNTYVFASMYMNLDNFEPVKYTLDDVIKYAKIEDLWILSRFNSMLKKVNESMKNYKVHEMANYLINFLVEDVSRFYIRLIRKRAWIEANTQDKIAMYYILYFILKQWIILASTIIPFISEKIYKSFVVNPKESVSMESSINYDERFIDNELERAFEVAREINEASLNARAKAGIKLRWPLAKVYIFVEDEDTLAKVNRIKDVLLSLLNAKDIEISKIEGFKSFSKYKVEPNRSIIGKEYKSMSPKILDYIRNNSDIIAIDILNKKQHVARIDNVDVILNTSHVIISEETIEGYVSSKFAQGIVVISKEISESEEEEGLVRDIIRRIQFMRKQLKLNVVDYIEISIKAPEERVKTIQKWEEFIKSETRGNKVILGDPKGDIVMDWDIEGESYIIGIKKST.

A 'HIGH' region motif is present at residues 48–59; it reads PYPSSPTPHIGT. A 'KMSKS' region motif is present at residues 597–601; that stretch reads EMHKS. Lys600 lines the ATP pocket.

It belongs to the class-I aminoacyl-tRNA synthetase family. IleS type 2 subfamily. As to quaternary structure, monomer. Zn(2+) is required as a cofactor.

The protein localises to the cytoplasm. The catalysed reaction is tRNA(Ile) + L-isoleucine + ATP = L-isoleucyl-tRNA(Ile) + AMP + diphosphate. In terms of biological role, catalyzes the attachment of isoleucine to tRNA(Ile). As IleRS can inadvertently accommodate and process structurally similar amino acids such as valine, to avoid such errors it has two additional distinct tRNA(Ile)-dependent editing activities. One activity is designated as 'pretransfer' editing and involves the hydrolysis of activated Val-AMP. The other activity is designated 'posttransfer' editing and involves deacylation of mischarged Val-tRNA(Ile). The sequence is that of Isoleucine--tRNA ligase from Saccharolobus islandicus (strain M.16.27) (Sulfolobus islandicus).